The chain runs to 155 residues: DNA-directed RNA polymerase II subunit rpb4 (155 aa).

It belongs to the eukaryotic RPB4 RNA polymerase subunit family. In terms of assembly, component of the RNA polymerase II (Pol II) complex consisting of 12 subunits. RPB4 and RPB7 form a subcomplex that protrudes from the 10-subunit Pol II core complex.

The protein resides in the nucleus. DNA-dependent RNA polymerase catalyzes the transcription of DNA into RNA using the four ribonucleoside triphosphates as substrates. Component of RNA polymerase II which synthesizes mRNA precursors and many functional non-coding RNAs. Pol II is the central component of the basal RNA polymerase II transcription machinery. It is composed of mobile elements that move relative to each other. RPB4 is part of a subcomplex with RPB7 that binds to a pocket formed by RPB1, RPB2 and RPB6 at the base of the clamp element. The RPB4-RPB7 subcomplex seems to lock the clamp via RPB7 in the closed conformation thus preventing double-stranded DNA to enter the active site cleft. The RPB4-RPB7 subcomplex binds single-stranded DNA and RNA. The sequence is that of DNA-directed RNA polymerase II subunit rpb4 (polr2d) from Dictyostelium discoideum (Social amoeba).